Here is a 348-residue protein sequence, read N- to C-terminus: Phospho-2-dehydro-3-deoxyheptonate aldolase, Trp-sensitive (348 aa).

Belongs to the class-I DAHP synthase family.

It catalyses the reaction D-erythrose 4-phosphate + phosphoenolpyruvate + H2O = 7-phospho-2-dehydro-3-deoxy-D-arabino-heptonate + phosphate. Its pathway is metabolic intermediate biosynthesis; chorismate biosynthesis; chorismate from D-erythrose 4-phosphate and phosphoenolpyruvate: step 1/7. Functionally, stereospecific condensation of phosphoenolpyruvate (PEP) and D-erythrose-4-phosphate (E4P) giving rise to 3-deoxy-D-arabino-heptulosonate-7-phosphate (DAHP). The chain is Phospho-2-dehydro-3-deoxyheptonate aldolase, Trp-sensitive (aroH) from Buchnera aphidicola subsp. Acyrthosiphon pisum (strain APS) (Acyrthosiphon pisum symbiotic bacterium).